Reading from the N-terminus, the 1205-residue chain is A disintegrin and metalloproteinase with thrombospondin motifs 2 (1205 aa).

Positions 1 to 28 are cleaved as a signal peptide; that stretch reads MDPPAGAAGRLLCPALLLLLLLPLPADA. Residues 29 to 253 constitute a propeptide that is removed on maturation; it reads RLAAAAADPP…VNSSRRRMRR (225 aa). Residues Asn-104 and Asn-245 are each glycosylated (N-linked (GlcNAc...) asparagine). Residues 260–464 enclose the Peptidase M12B domain; sequence YNIEVLLGVD…HSYDCLRDDP (205 aa). 10 disulfide bridges follow: Cys-337–Cys-386, Cys-380–Cys-459, Cys-419–Cys-445, Cys-486–Cys-511, Cys-497–Cys-520, Cys-506–Cys-539, Cys-533–Cys-544, Cys-567–Cys-604, Cys-571–Cys-609, and Cys-582–Cys-594. Residue His-402 participates in Zn(2+) binding. Glu-403 is an active-site residue. 2 residues coordinate Zn(2+): His-406 and His-412. Residues 474–554 enclose the Disintegrin domain; it reads QLPGLHYSMN…IWLTPDILKR (81 aa). The 56-residue stretch at 555 to 610 folds into the TSP type-1 1 domain; sequence DGNWGAWSPFGSCSRTCGTGVKFRTRQCDNPHPANGGRTCSGLAYDFQLCNSQDCP. The short motif at 685 to 687 is the Cell attachment site element; sequence RGD. The segment at 717–845 is spacer; that stretch reads KVVKGTFSRS…NVDDNNVLED (129 aa). 3 consecutive TSP type-1 domains span residues 848 to 906, 908 to 968, and 969 to 1023; these read VGYE…NPQE, SQPV…NREL, and CPGR…GPCP. Asn-942, Asn-943, and Asn-987 each carry an N-linked (GlcNAc...) asparagine glycan. 3 cysteine pairs are disulfide-bonded: Cys-981/Cys-1017, Cys-985/Cys-1022, and Cys-996/Cys-1006. N-linked (GlcNAc...) asparagine glycosylation occurs at Asn-1025. The region spanning 1053 to 1091 is the PLAC domain; sequence SKGRCQGDKSVFCRMEVLSRYCSIPGYNKLCCKSCNPHD. N-linked (GlcNAc...) asparagine glycans are attached at residues Asn-1092, Asn-1139, and Asn-1144. The disordered stretch occupies residues 1163–1184; sequence GLEDEVQPPNLIPRRPSPYEKT.

As to quaternary structure, may belong to a multimeric complex. Binds specifically to collagen type XIV. Requires Zn(2+) as cofactor. Post-translationally, the N-terminus is blocked. The precursor is cleaved by a furin endopeptidase. In terms of processing, glycosylated. Can be O-fucosylated by POFUT2 on a serine or a threonine residue found within the consensus sequence C1-X(2)-(S/T)-C2-G of the TSP type-1 repeat domains where C1 and C2 are the first and second cysteine residue of the repeat, respectively. Fucosylated repeats can then be further glycosylated by the addition of a beta-1,3-glucose residue by the glucosyltransferase, B3GALTL. Fucosylation mediates the efficient secretion of ADAMTS family members. Can also be C-glycosylated with one or two mannose molecules on tryptophan residues within the consensus sequence W-X-X-W of the TPRs, and N-glycosylated. These other glycosylations can also facilitate secretion. Enzymatic activity is detected at high level in all type I collagen-rich tissues such as skin, bones, tendons and aorta and at low level in brain and thymus. The mRNA levels were disproportionately high in heart, liver, retina and muscle.

The protein resides in the secreted. It localises to the extracellular space. It is found in the extracellular matrix. The enzyme catalyses Cleaves the N-propeptide of collagen chain alpha1(I) at Pro-|-Gln and of alpha1(II) and alpha2(I) at Ala-|-Gln.. Its function is as follows. Cleaves the propeptides of type I and II collagen prior to fibril assembly. Does not act on type III collagen. Cleaves lysyl oxidase LOX at a site downstream of its propeptide cleavage site to produce a short LOX form with reduced collagen-binding activity. The protein is A disintegrin and metalloproteinase with thrombospondin motifs 2 (ADAMTS2) of Bos taurus (Bovine).